The primary structure comprises 460 residues: Pentatricopeptide repeat-containing protein At5g43790 (460 aa).

PPR repeat units follow at residues 70–107 (SVFLYNTLISSIVSNHNSTQTHLAFSLYDQILSSRSNF), 111–142 (NEFTYPSLFKASGFDAQWHRHGRALHAHVLKF), 149–179 (DRFVQAALVGFYANCGKLREARSLFERIREP), 180–214 (DLATWNTLLAAYANSEEIDSDEEVLLLFMRMQVRP), 215–249 (NELSLVALIKSCANLGEFVRGVWAHVYVLKNNLTL), 250–280 (NQFVGTSLIDLYSKCGCLSFARKVFDEMSQR), 281–315 (DVSCYNAMIRGLAVHGFGQEGIELYKSLISQGLVP), 316–351 (DSATFVVTISACSHSGLVDEGLQIFNSMKAVYGIEP), and 352–382 (KVEHYGCLVDLLGRSGRLEEAEECIKKMPVK). Positions 387–460 (LWRSFLGSSQ…NKSPGISTLN (74 aa)) are type E motif; degenerate.

The protein belongs to the PPR family. PCMP-E subfamily.

The polypeptide is Pentatricopeptide repeat-containing protein At5g43790 (PCMP-E30) (Arabidopsis thaliana (Mouse-ear cress)).